The chain runs to 546 residues: Probable protein kinase UbiB (546 aa).

The region spanning 124-502 is the Protein kinase domain; sequence DFEIKPLASA…HVRQGQSRYF (379 aa). Residues 130–138 and K153 each bind ATP; that span reads LASASIAQV. The Proton acceptor role is filled by D288. Transmembrane regions (helical) follow at residues 501 to 521 and 522 to 542; these read YFLG…VSRP and EWGL…FVGW.

The protein belongs to the ABC1 family. UbiB subfamily.

The protein resides in the cell inner membrane. The protein operates within cofactor biosynthesis; ubiquinone biosynthesis [regulation]. Its function is as follows. Is probably a protein kinase regulator of UbiI activity which is involved in aerobic coenzyme Q (ubiquinone) biosynthesis. The protein is Probable protein kinase UbiB of Escherichia coli O45:K1 (strain S88 / ExPEC).